We begin with the raw amino-acid sequence, 84 residues long: Cell division topological specificity factor (84 aa).

It belongs to the MinE family.

In terms of biological role, prevents the cell division inhibition by proteins MinC and MinD at internal division sites while permitting inhibition at polar sites. This ensures cell division at the proper site by restricting the formation of a division septum at the midpoint of the long axis of the cell. In Paraburkholderia phymatum (strain DSM 17167 / CIP 108236 / LMG 21445 / STM815) (Burkholderia phymatum), this protein is Cell division topological specificity factor.